Here is a 311-residue protein sequence, read N- to C-terminus: p-hydroxybenzoic acid efflux pump subunit AaeA (311 aa).

The chain crosses the membrane as a helical span at residues 11-31 (IGITLLVVLLAVIAIFKVWAF).

It belongs to the membrane fusion protein (MFP) (TC 8.A.1) family.

The protein resides in the cell inner membrane. In terms of biological role, forms an efflux pump with AaeB. The chain is p-hydroxybenzoic acid efflux pump subunit AaeA from Yersinia enterocolitica serotype O:8 / biotype 1B (strain NCTC 13174 / 8081).